Consider the following 786-residue polypeptide: Endonuclease MutS2 (786 aa).

Position 333 to 340 (G333 to T340) interacts with ATP. The 76-residue stretch at L711–K786 folds into the Smr domain.

The protein belongs to the DNA mismatch repair MutS family. MutS2 subfamily. Homodimer. Binds to stalled ribosomes, contacting rRNA.

Its function is as follows. Endonuclease that is involved in the suppression of homologous recombination and thus may have a key role in the control of bacterial genetic diversity. Acts as a ribosome collision sensor, splitting the ribosome into its 2 subunits. Detects stalled/collided 70S ribosomes which it binds and splits by an ATP-hydrolysis driven conformational change. Acts upstream of the ribosome quality control system (RQC), a ribosome-associated complex that mediates the extraction of incompletely synthesized nascent chains from stalled ribosomes and their subsequent degradation. Probably generates substrates for RQC. The chain is Endonuclease MutS2 from Lacticaseibacillus paracasei (strain ATCC 334 / BCRC 17002 / CCUG 31169 / CIP 107868 / KCTC 3260 / NRRL B-441) (Lactobacillus paracasei).